The following is a 729-amino-acid chain: Transketolase (729 aa).

Substrate is bound at residue histidine 97. Thiamine diphosphate is bound by residues histidine 138 and 186–188; that span reads GPL. Aspartate 227 is a Mg(2+) binding site. 2 residues coordinate thiamine diphosphate: glycine 228 and asparagine 257. Asparagine 257 and isoleucine 259 together coordinate Mg(2+). The substrate site is built by histidine 332, arginine 423, and serine 450. Histidine 332 is a thiamine diphosphate binding site. Glutamate 477 (proton donor) is an active-site residue. Phenylalanine 503 is a binding site for thiamine diphosphate. 3 residues coordinate substrate: histidine 527, aspartate 535, and arginine 586.

It belongs to the transketolase family. As to quaternary structure, homodimer. The cofactor is Mg(2+). It depends on Ca(2+) as a cofactor. Requires Mn(2+) as cofactor. Co(2+) is required as a cofactor. Thiamine diphosphate serves as cofactor.

The catalysed reaction is D-sedoheptulose 7-phosphate + D-glyceraldehyde 3-phosphate = aldehydo-D-ribose 5-phosphate + D-xylulose 5-phosphate. Catalyzes the transfer of a two-carbon ketol group from a ketose donor to an aldose acceptor, via a covalent intermediate with the cofactor thiamine pyrophosphate. In Streptococcus pyogenes serotype M18 (strain MGAS8232), this protein is Transketolase (tkt).